The chain runs to 365 residues: tRNA-specific 2-thiouridylase MnmA (365 aa).

ATP contacts are provided by residues 14 to 21 and leucine 40; that span reads AMSGGVDS. Residue cysteine 108 is the Nucleophile of the active site. A disulfide bridge links cysteine 108 with cysteine 204. Glycine 132 contacts ATP. Positions 154-156 are interaction with tRNA; it reads KDQ. Cysteine 204 functions as the Cysteine persulfide intermediate in the catalytic mechanism.

The protein belongs to the MnmA/TRMU family.

The protein localises to the cytoplasm. The catalysed reaction is S-sulfanyl-L-cysteinyl-[protein] + uridine(34) in tRNA + AH2 + ATP = 2-thiouridine(34) in tRNA + L-cysteinyl-[protein] + A + AMP + diphosphate + H(+). Its function is as follows. Catalyzes the 2-thiolation of uridine at the wobble position (U34) of tRNA, leading to the formation of s(2)U34. The polypeptide is tRNA-specific 2-thiouridylase MnmA (Rickettsia africae (strain ESF-5)).